A 441-amino-acid chain; its full sequence is D-aminoacyl-tRNA deacylase (441 aa).

Belongs to the DtdA deacylase family. As to quaternary structure, monomer. It depends on Zn(2+) as a cofactor.

The catalysed reaction is a D-aminoacyl-tRNA + H2O = a tRNA + a D-alpha-amino acid + H(+). It catalyses the reaction glycyl-tRNA(Ala) + H2O = tRNA(Ala) + glycine + H(+). Functionally, D-aminoacyl-tRNA deacylase with broad substrate specificity. By recycling D-aminoacyl-tRNA to D-amino acids and free tRNA molecules, this enzyme counteracts the toxicity associated with the formation of D-aminoacyl-tRNA entities in vivo. This chain is D-aminoacyl-tRNA deacylase, found in Natronomonas pharaonis (strain ATCC 35678 / DSM 2160 / CIP 103997 / JCM 8858 / NBRC 14720 / NCIMB 2260 / Gabara) (Halobacterium pharaonis).